The chain runs to 420 residues: uncharacterized protein (420 aa).

A VWFA domain is found at 43–215; it reads NLCLVLDHSG…HTFRQLFQRM (173 aa). The interval 389-420 is disordered; the sequence is LQSGEDLSEGDRKKTRMVSKTTLQPPSAPSEH.

This is an uncharacterized protein from Synechocystis sp. (strain ATCC 27184 / PCC 6803 / Kazusa).